The following is a 306-amino-acid chain: Mycothiol acetyltransferase (306 aa).

N-acetyltransferase domains lie at 17-163 (VARV…RPMP) and 166-306 (LALS…YRRA). A 1D-myo-inositol 2-(L-cysteinylamino)-2-deoxy-alpha-D-glucopyranoside-binding site is contributed by Glu-48. 89–91 (IVV) is an acetyl-CoA binding site. 3 residues coordinate 1D-myo-inositol 2-(L-cysteinylamino)-2-deoxy-alpha-D-glucopyranoside: Glu-192, Lys-232, and Glu-239. Residues 243–245 (LGV) and 250–256 (AARGLGS) contribute to the acetyl-CoA site. Tyr-277 provides a ligand contact to 1D-myo-inositol 2-(L-cysteinylamino)-2-deoxy-alpha-D-glucopyranoside.

Belongs to the acetyltransferase family. MshD subfamily. In terms of assembly, monomer.

The catalysed reaction is 1D-myo-inositol 2-(L-cysteinylamino)-2-deoxy-alpha-D-glucopyranoside + acetyl-CoA = mycothiol + CoA + H(+). Functionally, catalyzes the transfer of acetyl from acetyl-CoA to desacetylmycothiol (Cys-GlcN-Ins) to form mycothiol. The chain is Mycothiol acetyltransferase from Clavibacter michiganensis subsp. michiganensis (strain NCPPB 382).